Consider the following 486-residue polypeptide: Galactose-1-phosphate uridylyltransferase (486 aa).

Belongs to the galactose-1-phosphate uridylyltransferase type 2 family.

It localises to the cytoplasm. It carries out the reaction alpha-D-galactose 1-phosphate + UDP-alpha-D-glucose = alpha-D-glucose 1-phosphate + UDP-alpha-D-galactose. It functions in the pathway carbohydrate metabolism; galactose metabolism. The polypeptide is Galactose-1-phosphate uridylyltransferase (Lacticaseibacillus paracasei (strain ATCC 334 / BCRC 17002 / CCUG 31169 / CIP 107868 / KCTC 3260 / NRRL B-441) (Lactobacillus paracasei)).